Reading from the N-terminus, the 333-residue chain is MVINDIESLTAQALADVAAAQNLDHLEFLRVALLGKNGSITLQLKQLGKLPVEQRKAIGEKLNRVRDLISAALMDRKAALESAALSKRLIDERVDVTLPGRRGERGGLHPVTRTLERITEIFARLGYELVEGPEIEDDWHNFEALNFPLHHPARAMHDTFYFGDGRLLRTHTSGVQVRYMSDHRPPLRMIAAGKVYRSDSDQTHSPMFHQIEGLLLDKHATFVDLKGTLSEFLRAFFERDFEVRFRPSYFPFVEPGAEVDIAWQQSDSSVRWLEVLGCGMVHPNVLKNVGIDSECYTGFAFGLGVERFAMLRYGVDDLRAFFENDVRFLRQFS.

A Mg(2+)-binding site is contributed by Glu-254.

It belongs to the class-II aminoacyl-tRNA synthetase family. Phe-tRNA synthetase alpha subunit type 1 subfamily. As to quaternary structure, tetramer of two alpha and two beta subunits. It depends on Mg(2+) as a cofactor.

The protein resides in the cytoplasm. The catalysed reaction is tRNA(Phe) + L-phenylalanine + ATP = L-phenylalanyl-tRNA(Phe) + AMP + diphosphate + H(+). The polypeptide is Phenylalanine--tRNA ligase alpha subunit (Xylella fastidiosa (strain M12)).